We begin with the raw amino-acid sequence, 458 residues long: BTB/POZ domain-containing protein At5g41330 (458 aa).

In terms of domain architecture, BTB spans 11-72 (NVVSINVGGR…LRTGNLPARS (62 aa)). 3 WD repeats span residues 259-305 (DSAI…MVWE), 360-399 (LNERRGVGSKIESYGNHVFCSSKGSGIELWSEVITGLVGN), and 421-458 (SGENKITGLAFGGNRMFVTRKDQQSVQVWQSPSRGISI).

Its pathway is protein modification; protein ubiquitination. May act as a substrate-specific adapter of an E3 ubiquitin-protein ligase complex (CUL3-RBX1-BTB) which mediates the ubiquitination and subsequent proteasomal degradation of target proteins. This Arabidopsis thaliana (Mouse-ear cress) protein is BTB/POZ domain-containing protein At5g41330.